Reading from the N-terminus, the 98-residue chain is NADH-ubiquinone oxidoreductase chain 4L (98 aa).

The next 3 membrane-spanning stretches (helical) occupy residues methionine 1–methionine 21, serine 29–leucine 49, and isoleucine 61–valine 81.

This sequence belongs to the complex I subunit 4L family. In terms of assembly, core subunit of respiratory chain NADH dehydrogenase (Complex I) which is composed of 45 different subunits.

It localises to the mitochondrion inner membrane. The catalysed reaction is a ubiquinone + NADH + 5 H(+)(in) = a ubiquinol + NAD(+) + 4 H(+)(out). Its function is as follows. Core subunit of the mitochondrial membrane respiratory chain NADH dehydrogenase (Complex I) which catalyzes electron transfer from NADH through the respiratory chain, using ubiquinone as an electron acceptor. Part of the enzyme membrane arm which is embedded in the lipid bilayer and involved in proton translocation. The sequence is that of NADH-ubiquinone oxidoreductase chain 4L (MT-ND4L) from Sturnira lilium (Lesser yellow-shouldered bat).